The primary structure comprises 228 residues: Dehydrin Rab25 (228 aa).

Disordered regions lie at residues 1–68 (MAEH…EAPH) and 115–228 (AGVT…HGHH). 2 stretches are compositionally biased toward basic and acidic residues: residues 169–187 (KEKI…EQKQ) and 212–228 (KGIV…HGHH).

This sequence belongs to the plant dehydrin family.

The sequence is that of Dehydrin Rab25 (RAB25) from Oryza sativa subsp. japonica (Rice).